A 448-amino-acid chain; its full sequence is Fibulin-5 (448 aa).

Residues 1–23 (MPGFKRILTVTVLALCLPTPGNA) form the signal peptide. The EGF-like 1; calcium-binding domain occupies 42–82 (DVDECRTIPEACRGDMMCVNQNGGYLCIPRTNPVYRGPYSN). Disulfide bonds link Cys-46–Cys-59, Cys-53–Cys-68, Cys-131–Cys-144, Cys-138–Cys-153, Cys-155–Cys-166, Cys-172–Cys-181, Cys-177–Cys-190, Cys-192–Cys-205, Cys-211–Cys-221, Cys-217–Cys-230, Cys-232–Cys-245, Cys-251–Cys-262, Cys-258–Cys-271, Cys-273–Cys-286, Cys-292–Cys-305, Cys-299–Cys-314, and Cys-320–Cys-332. The Cell attachment site signature appears at 54–56 (RGD). Residues 127 to 167 (DVDECATDSHQCNPTQICINTEGGYTCSCTDGYWLLEGQCL) form the EGF-like 2; calcium-binding domain. Residues 168–206 (DIDECRYGYCQQLCANVPGSYSCTCNPGFTLNEDGRSCQ) form the EGF-like 3; calcium-binding domain. Residues 207-246 (DVNECATENPCVQTCVNTYGSFICRCDPGYELEDDGVHCS) enclose the EGF-like 4; calcium-binding domain. Residues 245–448 (CSDMDECSFS…LRIYVSQYPF (204 aa)) form an interaction with LOXL1 region. The region spanning 247-287 (DMDECSFSEFLCQHECVNQPGTYFCSCPAGYILLDDNRSCQ) is the EGF-like 5; calcium-binding domain. Residues Asn-283 and Asn-296 are each glycosylated (N-linked (GlcNAc...) asparagine). In terms of domain architecture, EGF-like 6; calcium-binding spans 288 to 333 (DINECEHRNHTCILQQTCYNLQGGFKCIDPIRCEEPYLRISDNRCM).

Belongs to the fibulin family. As to quaternary structure, homodimer. Monomer, homodimerizes in presence of Ca(2+). Interacts with ELN. Interacts (via N-terminus) with the integrins ITGAV/ITGB3, ITGAV/ITGB5 and ITGA9/ITGB1. Interacts with FBN1 (via N-terminal domain). Forms a ternary complex with ELN and FBN1. Interacts with EFEMP2 with moderate affinity. Interacts with LOXL1. N-glycosylated.

The protein resides in the secreted. Its subcellular location is the extracellular space. The protein localises to the extracellular matrix. In terms of biological role, essential for elastic fiber formation, is involved in the assembly of continuous elastin (ELN) polymer and promotes the interaction of microfibrils and ELN. Stabilizes and organizes elastic fibers in the skin, lung and vasculature. Promotes adhesion of endothelial cells through interaction of integrins and the RGD motif. Vascular ligand for integrin receptors which may play a role in vascular development and remodeling. May act as an adapter that mediates the interaction between FBN1 and ELN. The protein is Fibulin-5 (FBLN5) of Bos taurus (Bovine).